Reading from the N-terminus, the 145-residue chain is Small ribosomal subunit protein eS19 (145 aa).

Residue Lys23 is modified to N6-acetyllysine. Arg67 carries the post-translational modification Omega-N-methylarginine. Residues Lys111 and Lys115 each carry the N6-acetyllysine modification. An N6-succinyllysine modification is found at Lys143.

It belongs to the eukaryotic ribosomal protein eS19 family. Component of the small ribosomal subunit. Part of the small subunit (SSU) processome, composed of more than 70 proteins and the RNA chaperone small nucleolar RNA (snoRNA) U3. Interacts with RPS19BP1; the interaction is direct and mediates the integration of RPS19 in state post-A1. Interacts with RPS19BP1.

The protein resides in the cytoplasm. It localises to the nucleus. Its subcellular location is the nucleolus. Component of the small ribosomal subunit. The ribosome is a large ribonucleoprotein complex responsible for the synthesis of proteins in the cell. Required for pre-rRNA processing and maturation of 40S ribosomal subunits. Part of the small subunit (SSU) processome, first precursor of the small eukaryotic ribosomal subunit. During the assembly of the SSU processome in the nucleolus, many ribosome biogenesis factors, an RNA chaperone and ribosomal proteins associate with the nascent pre-rRNA and work in concert to generate RNA folding, modifications, rearrangements and cleavage as well as targeted degradation of pre-ribosomal RNA by the RNA exosome. The protein is Small ribosomal subunit protein eS19 (RPS19) of Pongo abelii (Sumatran orangutan).